A 29-amino-acid chain; its full sequence is Cytochrome b6-f complex subunit 8 (29 aa).

Residues 3–23 (IVSLGWAFLMVVFSFSLSLVV) form a helical membrane-spanning segment.

The protein belongs to the PetN family. The 4 large subunits of the cytochrome b6-f complex are cytochrome b6, subunit IV (17 kDa polypeptide, PetD), cytochrome f and the Rieske protein, while the 4 small subunits are PetG, PetL, PetM and PetN. The complex functions as a dimer.

Its subcellular location is the plastid. The protein localises to the chloroplast thylakoid membrane. Its function is as follows. Component of the cytochrome b6-f complex, which mediates electron transfer between photosystem II (PSII) and photosystem I (PSI), cyclic electron flow around PSI, and state transitions. This chain is Cytochrome b6-f complex subunit 8, found in Chlorokybus atmophyticus (Soil alga).